The primary structure comprises 905 residues: Transcription termination factor 1 (905 aa).

Composition is skewed to basic and acidic residues over residues 1–16 and 24–33; these read MEGE…PVSD and IHKERPQKHS. The disordered stretch occupies residues 1–33; that stretch reads MEGESSRFEIHTPVSDKKKKKCSIHKERPQKHS. An N-terminal region (NRD) region spans residues 1–223; sequence MEGESSRFEI…AHKNKSKKKK (223 aa). Phosphoserine is present on S65. Positions 151-443 are disordered; that stretch reads SHAHKSEALH…KSRPRQKKTQ (293 aa). Basic residues-rich tracts occupy residues 163 to 174 and 215 to 226; these read VREKKNKKHQRK and HKNKSKKKKKKS. S240 bears the Phosphoserine mark. T248 carries the phosphothreonine modification. Basic residues-rich tracts occupy residues 270-283, 330-339, and 385-401; these read THKK…KKKS, NKSKKKKKKS, and TKKK…KRAR. S403 is subject to Phosphoserine. Positions 410 to 419 are enriched in polar residues; sequence PSKNSESTLF. A Phosphotyrosine modification is found at Y476. S478, S481, and S487 each carry phosphoserine. Residues 498 to 886 are may be involved in interaction with ARF; it reads LQEFIPNIKD…IEKESEGQAP (389 aa). Myb-like domains are found at residues 612 to 661 and 661 to 745; these read DVNN…SQIS and SSQR…TEIL. K700 is covalently cross-linked (Glycyl lysine isopeptide (Lys-Gly) (interchain with G-Cter in SUMO2)). S872 is modified (phosphoserine).

As to quaternary structure, oligomer. The oligomeric structure enables to interact simultaneously with two separate DNA fragments. Interacts with BAZ2A/TIP5. Interacts with CAVIN1. Interacts (via the N-terminal region (NRD) and a C-terminal region) with CDKN2A/ARF; the interaction is direct. Interacts (via C-terminal region) with NPM1/B23.

The protein resides in the nucleus. Its subcellular location is the nucleolus. It is found in the nucleoplasm. In terms of biological role, multifunctional nucleolar protein that terminates ribosomal gene transcription, mediates replication fork arrest and regulates RNA polymerase I transcription on chromatin. Plays a dual role in rDNA regulation, being involved in both activation and silencing of rDNA transcription. Interaction with BAZ2A/TIP5 recovers DNA-binding activity. The chain is Transcription termination factor 1 (TTF1) from Homo sapiens (Human).